Here is a 294-residue protein sequence, read N- to C-terminus: Tryptophan 2,3-dioxygenase (294 aa).

A disordered region spans residues M1 to A20. Residues F63–H67, Y125, and R129 each bind substrate. A heme-binding site is contributed by H252. T266 is a substrate binding site.

It belongs to the tryptophan 2,3-dioxygenase family. Homotetramer. Heme is required as a cofactor.

It carries out the reaction L-tryptophan + O2 = N-formyl-L-kynurenine. It functions in the pathway amino-acid degradation; L-tryptophan degradation via kynurenine pathway; L-kynurenine from L-tryptophan: step 1/2. Heme-dependent dioxygenase that catalyzes the oxidative cleavage of the L-tryptophan (L-Trp) pyrrole ring and converts L-tryptophan to N-formyl-L-kynurenine. Catalyzes the oxidative cleavage of the indole moiety. This chain is Tryptophan 2,3-dioxygenase, found in Cupriavidus necator (strain ATCC 17699 / DSM 428 / KCTC 22496 / NCIMB 10442 / H16 / Stanier 337) (Ralstonia eutropha).